Consider the following 245-residue polypeptide: Alpha carbonic anhydrase 2 (245 aa).

A signal peptide spans Met-1–Cys-23. The 209-residue stretch at His-37–Thr-245 folds into the Alpha-carbonic anhydrase domain. Residues Cys-62 and Cys-222 are joined by a disulfide bond. N-linked (GlcNAc...) asparagine glycosylation occurs at Asn-95. The active-site Proton acceptor is His-103. The N-linked (GlcNAc...) asparagine glycan is linked to Asn-120. Residues His-130, His-132, and His-149 each contribute to the Zn(2+) site. N-linked (GlcNAc...) asparagine glycosylation is present at Asn-156. Thr-218–Thr-219 contributes to the substrate binding site.

This sequence belongs to the alpha-class carbonic anhydrase family. Zn(2+) is required as a cofactor. N-glycosylated. In terms of tissue distribution, expressed in stems and roots.

It localises to the plastid. The protein localises to the chloroplast stroma. It catalyses the reaction hydrogencarbonate + H(+) = CO2 + H2O. Its function is as follows. Reversible hydration of carbon dioxide. This chain is Alpha carbonic anhydrase 2 (ACA2), found in Arabidopsis thaliana (Mouse-ear cress).